Consider the following 94-residue polypeptide: Acylphosphatase (94 aa).

The Acylphosphatase-like domain occupies 8 to 94 (TVHVIVKGKV…EKRYKHFAQL (87 aa)). Residues Arg23 and Asn41 contribute to the active site.

Belongs to the acylphosphatase family.

It carries out the reaction an acyl phosphate + H2O = a carboxylate + phosphate + H(+). In Bordetella parapertussis (strain 12822 / ATCC BAA-587 / NCTC 13253), this protein is Acylphosphatase (acyP).